Here is a 130-residue protein sequence, read N- to C-terminus: Gonadotropin subunit beta-1 (130 aa).

Positions 1 to 18 are cleaved as a signal peptide; the sequence is MRMRFVVMVILLPALMMS. 5 disulfides stabilise this stretch: Cys26–Cys74, Cys40–Cys89, Cys51–Cys105, Cys55–Cys107, and Cys110–Cys117. Asn30 carries an N-linked (GlcNAc...) asparagine glycan.

It belongs to the glycoprotein hormones subunit beta family. As to quaternary structure, heterodimer of an alpha and a beta chain.

The protein resides in the secreted. In terms of biological role, involved in gametogenesis and steroidogenesis. This is Gonadotropin subunit beta-1 (cgba) from Carassius auratus (Goldfish).